A 123-amino-acid polypeptide reads, in one-letter code: Ribonuclease P protein component (123 aa).

The protein belongs to the RnpA family. In terms of assembly, consists of a catalytic RNA component (M1 or rnpB) and a protein subunit.

The enzyme catalyses Endonucleolytic cleavage of RNA, removing 5'-extranucleotides from tRNA precursor.. In terms of biological role, RNaseP catalyzes the removal of the 5'-leader sequence from pre-tRNA to produce the mature 5'-terminus. It can also cleave other RNA substrates such as 4.5S RNA. The protein component plays an auxiliary but essential role in vivo by binding to the 5'-leader sequence and broadening the substrate specificity of the ribozyme. The chain is Ribonuclease P protein component from Bordetella petrii (strain ATCC BAA-461 / DSM 12804 / CCUG 43448).